Consider the following 236-residue polypeptide: Leucyl/phenylalanyl-tRNA--protein transferase (236 aa).

The segment covering 1 to 13 (MNSLSYLNQDQQS) has biased composition (polar residues). Residues 1–22 (MNSLSYLNQDQQSFPPPEQALS) form a disordered region.

This sequence belongs to the L/F-transferase family.

Its subcellular location is the cytoplasm. It carries out the reaction N-terminal L-lysyl-[protein] + L-leucyl-tRNA(Leu) = N-terminal L-leucyl-L-lysyl-[protein] + tRNA(Leu) + H(+). The enzyme catalyses N-terminal L-arginyl-[protein] + L-leucyl-tRNA(Leu) = N-terminal L-leucyl-L-arginyl-[protein] + tRNA(Leu) + H(+). The catalysed reaction is L-phenylalanyl-tRNA(Phe) + an N-terminal L-alpha-aminoacyl-[protein] = an N-terminal L-phenylalanyl-L-alpha-aminoacyl-[protein] + tRNA(Phe). Its function is as follows. Functions in the N-end rule pathway of protein degradation where it conjugates Leu, Phe and, less efficiently, Met from aminoacyl-tRNAs to the N-termini of proteins containing an N-terminal arginine or lysine. The polypeptide is Leucyl/phenylalanyl-tRNA--protein transferase (Shewanella piezotolerans (strain WP3 / JCM 13877)).